The primary structure comprises 345 residues: Protein D345L (345 aa).

Belongs to the asfivirus D345L family. In terms of assembly, interacts with IKKA/CHUK and IKBKB.

It is found in the host cytoplasm. Plays a role in the negative regulation of host NF-kappa-B signaling pathway. Mechanistically, recruits host IKKA/CHUK and IKBKB to suppress their kinase activity towards NFKBIA. The protein is Protein D345L of African swine fever virus (strain Badajoz 1971 Vero-adapted) (Ba71V).